Consider the following 149-residue polypeptide: Nucleoside diphosphate kinase (149 aa).

Residues K9, F57, R85, T91, R102, and N112 each contribute to the ATP site. H115 serves as the catalytic Pros-phosphohistidine intermediate.

Belongs to the NDK family. Homotetramer. It depends on Mg(2+) as a cofactor.

It is found in the cytoplasm. It carries out the reaction dZDP + ATP = dZTP + ADP. It catalyses the reaction a 2'-deoxyribonucleoside 5'-diphosphate + ATP = a 2'-deoxyribonucleoside 5'-triphosphate + ADP. The catalysed reaction is a ribonucleoside 5'-diphosphate + ATP = a ribonucleoside 5'-triphosphate + ADP. Its pathway is purine metabolism. Its function is as follows. Major role in the synthesis of nucleoside triphosphates other than ATP. The ATP gamma phosphate is transferred to the NDP beta phosphate via a ping-pong mechanism, using a phosphorylated active-site intermediate. Functionally, (Microbial infection) Catalyzes the phosphorylation of dZDP to dZTP, when the bacterium is infected by a phage that produces the substrate for the synthesis of dZTP (2- amino-2'-deoxyadenosine 5'-triphosphate), which is then used by the phage as a DNA polymerase substrate. The sequence is that of Nucleoside diphosphate kinase from Picosynechococcus sp. (strain ATCC 27264 / PCC 7002 / PR-6) (Agmenellum quadruplicatum).